A 360-amino-acid polypeptide reads, in one-letter code: Hereditary hemochromatosis protein homolog (360 aa).

The first 25 residues, 1-25, serve as a signal peptide directing secretion; that stretch reads MDRSAGLPVRLLLLLLLLLLWSVAP. An alpha-1 region spans residues 26–127; sequence QALRPGSHSL…KVTKLRVVPE (102 aa). At 26–319 the chain is on the extracellular side; sequence QALRPGSHSL…WEPSRSQDMI (294 aa). Residues asparagine 115, asparagine 143, asparagine 167, and asparagine 247 are each glycosylated (N-linked (GlcNAc...) asparagine). Residues 128–218 form an alpha-2 region; it reads SHILQVILGC…ELQRGVLGQQ (91 aa). 2 disulfide bridges follow: cysteine 137–cysteine 200 and cysteine 238–cysteine 295. The tract at residues 219–310 is alpha-3; the sequence is VPTLVKVTRH…GLDQPLTATW (92 aa). One can recognise an Ig-like C1-type domain in the interval 220-309; the sequence is PTLVKVTRHW…PGLDQPLTAT (90 aa). The tract at residues 311 to 319 is connecting peptide; sequence EPSRSQDMI. The helical transmembrane segment at 320–340 threads the bilayer; it reads IGIISGITICAIFFVGILILV. The Cytoplasmic portion of the chain corresponds to 341 to 360; sequence LRKRKVSGGTMGDYVLTECE.

Belongs to the MHC class I family. Binds TFR through the extracellular domain in a pH-dependent manner.

It localises to the cell membrane. Binds to transferrin receptor (TFR) and reduces its affinity for iron-loaded transferrin. The protein is Hereditary hemochromatosis protein homolog (Hfe) of Rattus norvegicus (Rat).